The primary structure comprises 365 residues: tRNA-specific 2-thiouridylase MnmA (365 aa).

Residues 14-21 (AMSGGVDS) and L40 each bind ATP. The Nucleophile role is filled by C108. A disulfide bridge links C108 with C204. G132 provides a ligand contact to ATP. The interaction with tRNA stretch occupies residues 154 to 156 (KDQ). C204 functions as the Cysteine persulfide intermediate in the catalytic mechanism.

It belongs to the MnmA/TRMU family.

It is found in the cytoplasm. The enzyme catalyses S-sulfanyl-L-cysteinyl-[protein] + uridine(34) in tRNA + AH2 + ATP = 2-thiouridine(34) in tRNA + L-cysteinyl-[protein] + A + AMP + diphosphate + H(+). Its function is as follows. Catalyzes the 2-thiolation of uridine at the wobble position (U34) of tRNA, leading to the formation of s(2)U34. The sequence is that of tRNA-specific 2-thiouridylase MnmA from Rickettsia massiliae (strain Mtu5).